The following is a 658-amino-acid chain: MAEAAAAAAAAAAAGETSASSGSAAERDPDQDRAGRRLRVLSGHLLGRPQEALSTNECKARRAASAATAAPTATPAAPESGIIPKKRQELMKWNGWGYNDSKFFLNKKGQLELTGKRYPLSGVALPTFKDWIQNTFGINLDHKTTSKASLNPSDTPPSIVNEDFLHELKKTNISYSQEADDRVFRAHGHCLHEIFLLREGMFERIPDIVLWPTCHDDVVKIVNLACKYNLCIIPIGGGTSVSYGLMCPADETRTIISLDTSQMNRILWVDENNLTAHVEAGITGQELERQLKESGYCTGHEPDSLEFSTVGGWISTRASGMKKNIYGNIEDLVVHMKVVTPRGVIEKSCQGPRMSTGPDIHHFIMGSEGTLGVITEATIKIRPTPEYQKYGSVAFPNFEQGVACLREIAKQRCAPASIRLMDNQQFQFGHALKPQVSSIFTSFLDGLKKFYITKFKGFDPNQLSVATLLFEGDREKVLQHEKQVYDIAAKFGGLAAGEDNGQRGYLLTYVIAYMRDLGLEYYIIGESFETSAPWDRVVDLCRNVKERIRRECKEKGVQFPPLSTCRVTQTYDAGACIYFYFAFNYRGISDPLAVFEQTEAAAREEILANGGSLSHHHGVGKLRKQWLKESISDVGFGMLKSVKDYVDPTNIFGNRNLL.

The span at 1–24 shows a compositional bias: low complexity; it reads MAEAAAAAAAAAAAGETSASSGSA. Residues 1-37 form a disordered region; that stretch reads MAEAAAAAAAAAAAGETSASSGSAAERDPDQDRAGRR. A peroxisome-targeting transit peptide spans 1-58; sequence MAEAAAAAAAAAAAGETSASSGSAAERDPDQDRAGRRLRVLSGHLLGRPQEALSTNEC. Basic and acidic residues predominate over residues 25–35; the sequence is AERDPDQDRAG. Position 65 is a phosphoserine (Ser-65). A Phosphothreonine modification is found at Thr-74. N6-acetyllysine is present on Lys-102. In terms of domain architecture, FAD-binding PCMH-type spans 202 to 384; that stretch reads FERIPDIVLW…TEATIKIRPT (183 aa). FAD is bound by residues 234 to 240, 303 to 309, and 316 to 319; these read PIGGGTS, DSLEFST, and TRAS. Position 347 is an N6-acetyllysine (Lys-347). 368–374 provides a ligand contact to FAD; the sequence is EGTLGVI. Substrate is bound at residue Arg-515. Tyr-578 acts as the Proton donor/acceptor in catalysis. Important for enzyme activity regions lie at residues 615-617 and 654-658; these read HHH and NRNLL.

It belongs to the FAD-binding oxidoreductase/transferase type 4 family. As to quaternary structure, homodimer. FAD is required as a cofactor.

It is found in the peroxisome membrane. Its subcellular location is the peroxisome. It carries out the reaction a long chain fatty alcohol + a 1-acylglycerone 3-phosphate = a 1-O-alkylglycerone 3-phosphate + a long-chain fatty acid + H(+). It catalyses the reaction hexadecan-1-ol + 1-hexadecanoylglycerone 3-phosphate = 1-O-hexadecylglycerone 3-phosphate + hexadecanoate + H(+). The enzyme catalyses 1-hexadecanoylglycerone 3-phosphate + a long-chain fatty acid = a 1-acylglycerone 3-phosphate + hexadecanoate. Its pathway is glycerolipid metabolism; ether lipid biosynthesis. With respect to regulation, inhibited by N-ethylmaleimide, p-bromophenacylbromide, 2,4- dinitrofluorobenzene and divalent cations such as such as Mn(2+), Mg(2+) and Zn(2+). Inhibition by p-bromophenacylbromide is strongly pH dependent and is highest at alkaline conditions. Its function is as follows. Catalyzes the exchange of the acyl chain in acyl-dihydroxyacetonephosphate (acyl-DHAP) for a long chain fatty alcohol, yielding the first ether linked intermediate, i.e. alkyl-dihydroxyacetonephosphate (alkyl-DHAP), in the pathway of ether lipid biosynthesis. The polypeptide is Alkyldihydroxyacetonephosphate synthase, peroxisomal (AGPS) (Cavia porcellus (Guinea pig)).